The sequence spans 182 residues: Fucoxanthin-chlorophyll a-c binding protein D, chloroplastic (182 aa).

A chloroplast-targeting transit peptide spans 1 to 4 (AMKM). The next 3 membrane-spanning stretches (helical) occupy residues 46-66 (IAMLAIAGHLTQQNARLPGML), 87-107 (IPPGGLAQIFGFIGFLELAVM), and 148-168 (GRAAQMGILALMVHEELNNKP).

This sequence belongs to the fucoxanthin chlorophyll protein family. The LHC complex of chromophytic algae is composed of fucoxanthin, chlorophyll A and C bound non-covalently by fucoxanthin chlorophyll proteins (FCPs). The ratio of pigments in this LHC is; fucoxanthin: chlorophyll C: chlorophyll A; (0.6-1): (0.1-0.3): (1).

It localises to the plastid. The protein localises to the chloroplast thylakoid membrane. The light-harvesting complex (LHC) functions as a light receptor, it captures and delivers excitation energy to photosystems with which it is closely associated. Energy is transferred from the carotenoid and chlorophyll C (or B) to chlorophyll A and the photosynthetic reaction centers where it is used to synthesize ATP and reducing power. The polypeptide is Fucoxanthin-chlorophyll a-c binding protein D, chloroplastic (FCPD) (Macrocystis pyrifera (Giant kelp)).